The following is a 378-amino-acid chain: MHDPLGNPVLRNARRIVVKVGSSLVTNEGRGLDAIAIGQWCEQLAALIKDGREVIMVSSGAIAEGMKRLGWSLRPKAIHELQAAAAVGQMGLVQMYETKLRENGIGSAQVLLTHADLADRERYLNARSTLLTLLQLGVVPVINENDTVVNDEIKFGDNDTLGALVANLVEADALIILTDQKGLYTADPRKDPAAQFVHEAKAGDAALEAMAGGAGSSIGRGGMITKILAAKRAAGSGASTVIAWGREPEALIRLTQGEAIGTLLVAQTQKTQARKQWMADHLQLRGSVTVDPGAASMVQVGGKSLLPIGMTGVQGDFSRGDVIAVKDADGVEIARGLANYSSAEARLICRKVSSEFEKLLGYTGESEMVHRTNLILSR.

K19 contributes to the ATP binding site. Residues S59, D146, and N158 each contribute to the substrate site. 178 to 179 lines the ATP pocket; that stretch reads TD. One can recognise a PUA domain in the interval 285 to 363; that stretch reads RGSVTVDPGA…SEFEKLLGYT (79 aa).

This sequence belongs to the glutamate 5-kinase family.

It is found in the cytoplasm. It carries out the reaction L-glutamate + ATP = L-glutamyl 5-phosphate + ADP. It participates in amino-acid biosynthesis; L-proline biosynthesis; L-glutamate 5-semialdehyde from L-glutamate: step 1/2. Functionally, catalyzes the transfer of a phosphate group to glutamate to form L-glutamate 5-phosphate. The sequence is that of Glutamate 5-kinase from Polaromonas naphthalenivorans (strain CJ2).